Consider the following 428-residue polypeptide: Flotillin-2 (428 aa).

G2 carries the N-myristoyl glycine lipid modification. A lipid anchor (S-palmitoyl cysteine; by ZDHHC5) is attached at C4. C19 is lipidated: S-palmitoyl cysteine. C20 is lipidated: S-palmitoyl cysteine; by ZDHHC5. At S405 the chain carries Phosphoserine.

Belongs to the band 7/mec-2 family. Flotillin subfamily. As to quaternary structure, heterooligomeric complex of flotillin-1 and flotillin-2 and caveolin-1 and caveolin-2. Interacts with ECPAS. In terms of processing, ZDHHC5-catalyzed palmitoylation may be required for the formation of higher-order complexes and for neurite outgrowth in cultured neural stem cells.

Its subcellular location is the cell membrane. The protein localises to the membrane. The protein resides in the caveola. It is found in the endosome. In terms of biological role, may act as a scaffolding protein within caveolar membranes, functionally participating in formation of caveolae or caveolae-like vesicles. May be involved in epidermal cell adhesion and epidermal structure and function. The polypeptide is Flotillin-2 (FLOT2) (Bos taurus (Bovine)).